The sequence spans 152 residues: MFSGASAINLDAKGRIAMPKRHREPLHAHHNSQLVITVDIQSPCLLLYPVQEWQQIAVKLSQLSDTQPAERAIKRMLLGYAHECELDGNGRILLPTPLRQYANLEKRAMLVGQLNKFELWDEAAWQQQIEESRIAILNEDLAANQRLADFSL.

2 consecutive SpoVT-AbrB domains span residues 5–52 (ASAI…PVQE) and 81–124 (AHEC…DEAA).

It belongs to the MraZ family. In terms of assembly, forms oligomers.

The protein localises to the cytoplasm. Its subcellular location is the nucleoid. In Shewanella piezotolerans (strain WP3 / JCM 13877), this protein is Transcriptional regulator MraZ.